A 119-amino-acid chain; its full sequence is Large ribosomal subunit protein bL20 (119 aa).

It belongs to the bacterial ribosomal protein bL20 family.

Binds directly to 23S ribosomal RNA and is necessary for the in vitro assembly process of the 50S ribosomal subunit. It is not involved in the protein synthesizing functions of that subunit. The polypeptide is Large ribosomal subunit protein bL20 (Halorhodospira halophila (strain DSM 244 / SL1) (Ectothiorhodospira halophila (strain DSM 244 / SL1))).